The following is a 396-amino-acid chain: Ribosomal RNA large subunit methyltransferase I (396 aa).

The PUA domain maps to 2 to 81; it reads SVRLVLAKGR…ESIDIAFFSR (80 aa).

Belongs to the methyltransferase superfamily. RlmI family.

The protein resides in the cytoplasm. It carries out the reaction cytidine(1962) in 23S rRNA + S-adenosyl-L-methionine = 5-methylcytidine(1962) in 23S rRNA + S-adenosyl-L-homocysteine + H(+). Functionally, specifically methylates the cytosine at position 1962 (m5C1962) of 23S rRNA. The polypeptide is Ribosomal RNA large subunit methyltransferase I (Shigella flexneri serotype 5b (strain 8401)).